The chain runs to 466 residues: Cysteine--tRNA ligase (466 aa).

C27 serves as a coordination point for Zn(2+). The 'HIGH' region motif lies at 29–39 (PTVYDDAHLGH). C208, H238, and E242 together coordinate Zn(2+). The short motif at 270-274 (KMSKS) is the 'KMSKS' region element. K273 is an ATP binding site.

The protein belongs to the class-I aminoacyl-tRNA synthetase family. Monomer. It depends on Zn(2+) as a cofactor.

It localises to the cytoplasm. It catalyses the reaction tRNA(Cys) + L-cysteine + ATP = L-cysteinyl-tRNA(Cys) + AMP + diphosphate. This Sulfurimonas denitrificans (strain ATCC 33889 / DSM 1251) (Thiomicrospira denitrificans (strain ATCC 33889 / DSM 1251)) protein is Cysteine--tRNA ligase.